The sequence spans 657 residues: Histidine ammonia-lyase (657 aa).

Positions 253–255 (ASG) form a cross-link, 5-imidazolinone (Ala-Gly). A 2,3-didehydroalanine (Ser) modification is found at Ser-254. At Thr-396 the chain carries Phosphothreonine. Ser-635 carries the post-translational modification Phosphoserine. A Phosphothreonine modification is found at Thr-637. A Phosphoserine modification is found at Ser-648.

Belongs to the PAL/histidase family. Contains an active site 4-methylidene-imidazol-5-one (MIO), which is formed autocatalytically by cyclization and dehydration of residues Ala-Ser-Gly.

It carries out the reaction L-histidine = trans-urocanate + NH4(+). Its pathway is amino-acid degradation; L-histidine degradation into L-glutamate; N-formimidoyl-L-glutamate from L-histidine: step 1/3. This Bos taurus (Bovine) protein is Histidine ammonia-lyase (HAL).